The chain runs to 436 residues: GDP-mannose 6-dehydrogenase (436 aa).

The NAD(+) site is built by tyrosine 10, valine 11, aspartate 30, lysine 35, threonine 86, and threonine 124. GDP-alpha-D-mannuronate contacts are provided by glutamate 161, lysine 210, asparagine 214, histidine 217, asparagine 225, tyrosine 256, tyrosine 257, arginine 259, phenylalanine 262, and glycine 265. The Nucleophile role is filled by cysteine 268. Lysine 271 serves as a coordination point for NAD(+). The segment at 278-295 (YRASQLDVEHPMLGSLMR) is inter-domain linker. Lysine 324 contacts GDP-alpha-D-mannuronate. Arginine 331 is an NAD(+) binding site.

This sequence belongs to the UDP-glucose/GDP-mannose dehydrogenase family. Forms a domain-swapped dimer with each peptide contributing to each active site. The dimers assemble further. X-ray structures indicate this enzyme exists as a homotetramer PubMed:12705829, but kinetic and physical results obtained in PubMed:2470755 and PubMed:12135385 indicate that it is probably a homohexamer.

The enzyme catalyses GDP-alpha-D-mannose + 2 NAD(+) + H2O = GDP-alpha-D-mannuronate + 2 NADH + 3 H(+). It functions in the pathway glycan biosynthesis; alginate biosynthesis. Its activity is regulated as follows. Inhibited by GMP, ATP, GDP-D-glucose and maltose. Inhibited by GMP and deamidoNAD. Functionally, catalyzes the oxidation of guanosine diphospho-D-mannose (GDP-D-mannose) to GDP-D-mannuronic acid, a precursor for alginate polymerization. The alginate layer causes a mucoid phenotype and provides a protective barrier against host immune defenses and antibiotics. Other sugars are not used as substrates. The polypeptide is GDP-mannose 6-dehydrogenase (Pseudomonas aeruginosa (strain ATCC 15692 / DSM 22644 / CIP 104116 / JCM 14847 / LMG 12228 / 1C / PRS 101 / PAO1)).